The chain runs to 398 residues: O-methyltransferase mpaG (398 aa).

Aspartate 264 contacts S-adenosyl-L-methionine. Histidine 306 serves as the catalytic Proton acceptor. Catalysis depends on residues glutamate 335 and glutamate 362.

Belongs to the class I-like SAM-binding methyltransferase superfamily. Cation-independent O-methyltransferase family. COMT subfamily.

It is found in the cytoplasm. The protein localises to the cytosol. It catalyses the reaction (4E,8E)-10-(4,6-dihydroxy-7-methyl-3-oxo-1,3-dihydro-2-benzofuran-5-yl)-4,8-dimethyldeca-4,8-dienoate + S-adenosyl-L-methionine = (4E,8E)-10-(4-hydroxy-6-methoxy-7-methyl-3-oxo-1,3-dihydro-2-benzofuran-5-yl)-4,8-dimethyldeca-4,8-dienoate + S-adenosyl-L-homocysteine + H(+). It functions in the pathway secondary metabolite biosynthesis; terpenoid biosynthesis. O-methyltransferase; part of the gene cluster that mediates the biosynthesis of mycophenolic acid (MPA), the first isolated antibiotic natural product in the world obtained from a culture of Penicillium brevicompactum in 1893. MpaC methylates farnesyl-DHMP-3C (FDHMP-3C) to yield MFDHMP-3C. The first step of the pathway is the synthesis of 5-methylorsellinic acid (5MOA) by the cytosolic polyketide synthase mpaC. 5MOA is then converted to the phthalide compound 5,7-dihydroxy-4,6-dimethylphthalide (DHMP) by the endoplasmic reticulum-bound cytochrome P450 monooxygenase mpaDE. MpaDE first catalyzes hydroxylation of 5-MOA to 4,6-dihydroxy-2-(hydroxymethyl)-3-methylbenzoic acid (DHMB). MpaDE then acts as a lactone synthase that catalyzes the ring closure to convert DHMB into DHMP. The next step is the prenylation of DHMP by the Golgi apparatus-associated prenyltransferase mpaA to yield farnesyl-DHMP (FDHMP). The ER-bound oxygenase mpaB then mediates the oxidative cleavage the C19-C20 double bond in FDHMP to yield FDHMP-3C via a mycophenolic aldehyde intermediate. The O-methyltransferase mpaG catalyzes the methylation of FDHMP-3C to yield MFDHMP-3C. After the cytosolic methylation of FDHMP-3C, MFDHMP-3C enters into peroxisomes probably via free diffusion due to its low molecular weight. Upon a peroxisomal CoA ligation reaction, catalyzed by a beta-oxidation component enzyme acyl-CoA ligase ACL891, MFDHMP-3C-CoA would then be restricted to peroxisomes for the following beta-oxidation pathway steps. The peroxisomal beta-oxidation machinery than converts MFDHMP-3C-CoA into MPA_CoA, via a beta-oxidation chain-shortening process. Finally mpaH acts as a peroxisomal acyl-CoA hydrolase with high substrate specificity toward MPA-CoA to release the final product MPA. In Penicillium roqueforti (strain FM164), this protein is O-methyltransferase mpaG.